The primary structure comprises 181 residues: Protein GrpE (181 aa).

It belongs to the GrpE family. In terms of assembly, homodimer.

It is found in the cytoplasm. Participates actively in the response to hyperosmotic and heat shock by preventing the aggregation of stress-denatured proteins, in association with DnaK and GrpE. It is the nucleotide exchange factor for DnaK and may function as a thermosensor. Unfolded proteins bind initially to DnaJ; upon interaction with the DnaJ-bound protein, DnaK hydrolyzes its bound ATP, resulting in the formation of a stable complex. GrpE releases ADP from DnaK; ATP binding to DnaK triggers the release of the substrate protein, thus completing the reaction cycle. Several rounds of ATP-dependent interactions between DnaJ, DnaK and GrpE are required for fully efficient folding. The sequence is that of Protein GrpE from Verminephrobacter eiseniae (strain EF01-2).